The primary structure comprises 352 residues: tRNA N6-adenosine threonylcarbamoyltransferase (352 aa).

Fe cation contacts are provided by His-115 and His-119. Residues 138–142 (LVSGG), Asp-171, Gly-184, and Asn-276 contribute to the substrate site. Fe cation is bound at residue Asp-304.

It belongs to the KAE1 / TsaD family. Fe(2+) is required as a cofactor.

It is found in the cytoplasm. The catalysed reaction is L-threonylcarbamoyladenylate + adenosine(37) in tRNA = N(6)-L-threonylcarbamoyladenosine(37) in tRNA + AMP + H(+). Required for the formation of a threonylcarbamoyl group on adenosine at position 37 (t(6)A37) in tRNAs that read codons beginning with adenine. Is involved in the transfer of the threonylcarbamoyl moiety of threonylcarbamoyl-AMP (TC-AMP) to the N6 group of A37, together with TsaE and TsaB. TsaD likely plays a direct catalytic role in this reaction. The protein is tRNA N6-adenosine threonylcarbamoyltransferase of Xanthomonas axonopodis pv. citri (strain 306).